The following is a 175-amino-acid chain: Protein LpfE (175 aa).

Residues 1 to 20 form the signal peptide; that stretch reads MKNLHALMPACLLLTASAMA.

This sequence belongs to the fimbrial protein family.

Its subcellular location is the fimbrium. This is Protein LpfE (lpfE) from Salmonella typhimurium (strain LT2 / SGSC1412 / ATCC 700720).